Consider the following 766-residue polypeptide: FYVE, RhoGEF and PH domain-containing protein 4 (766 aa).

3 disordered regions span residues 1 to 20, 46 to 83, and 134 to 188; these read MEEI…PSKV, NLNA…DKTQ, and ETAT…ESPL. Positions 1-150 are actin filament-binding; the sequence is MEEIKPASAS…SPTTDSCDGN (150 aa). Composition is skewed to polar residues over residues 58–83 and 145–157; these read LTTT…DKTQ and DSCD…SSYR. Basic and acidic residues predominate over residues 167–184; sequence LEERGAETETKVQERENG. Positions 206–393 constitute a DH domain; that stretch reads KLHKIANELL…STAASHSNSA (188 aa). Positions 422–521 constitute a PH 1 domain; sequence ELIKEGQILK…WIKALQETID (100 aa). An FYVE-type zinc finger spans residues 559-619; the sequence is DNEVTMCMKC…VCKDCYQIIS (61 aa). Zn(2+) contacts are provided by Cys-565, Cys-568, Cys-582, Cys-585, Cys-590, Cys-593, Cys-611, and Cys-614. In terms of domain architecture, PH 2 spans 643–740; the sequence is NSVVCSFLQY…WLKVILLAVT (98 aa). Phosphoserine is present on residues Ser-702 and Ser-716. Positions 742–766 are disordered; sequence ETPGGPNEHPATLDDHPEPKKKSEC. A compositionally biased stretch (basic and acidic residues) spans 752-766; that stretch reads ATLDDHPEPKKKSEC.

As to quaternary structure, homooligomer. Expressed in different tissues, including brain, cerebellum, peripheral nerve, skeletal muscle, heart, uterus, placenta and testis.

Its subcellular location is the cytoplasm. It is found in the cytoskeleton. The protein localises to the cell projection. It localises to the filopodium. Activates CDC42, a member of the Ras-like family of Rho- and Rac proteins, by exchanging bound GDP for free GTP. Plays a role in regulating the actin cytoskeleton and cell shape. Activates MAPK8. In Homo sapiens (Human), this protein is FYVE, RhoGEF and PH domain-containing protein 4 (FGD4).